Here is a 78-residue protein sequence, read N- to C-terminus: MSRVCQVTGKRPVAGNNRSHALNATKRRFLPNLHSHRFWVEGEKRFVTLRVSAKGMRVIDKKGIETVLADLRTRGEKY.

The protein belongs to the bacterial ribosomal protein bL28 family.

The sequence is that of Large ribosomal subunit protein bL28 from Pectobacterium atrosepticum (strain SCRI 1043 / ATCC BAA-672) (Erwinia carotovora subsp. atroseptica).